Consider the following 397-residue polypeptide: Acetate kinase (397 aa).

Residue Asn8 coordinates Mg(2+). Residue Lys15 coordinates ATP. Arg89 contributes to the substrate binding site. Residue Asp146 is the Proton donor/acceptor of the active site. ATP is bound by residues 206 to 210 (HIGNG), 281 to 283 (DLR), and 328 to 332 (GVGEN). Residue Glu381 participates in Mg(2+) binding.

This sequence belongs to the acetokinase family. As to quaternary structure, homodimer. Mg(2+) is required as a cofactor. It depends on Mn(2+) as a cofactor.

The protein resides in the cytoplasm. The enzyme catalyses acetate + ATP = acetyl phosphate + ADP. It functions in the pathway metabolic intermediate biosynthesis; acetyl-CoA biosynthesis; acetyl-CoA from acetate: step 1/2. Functionally, catalyzes the formation of acetyl phosphate from acetate and ATP. Can also catalyze the reverse reaction. This Oceanobacillus iheyensis (strain DSM 14371 / CIP 107618 / JCM 11309 / KCTC 3954 / HTE831) protein is Acetate kinase.